The following is a 197-amino-acid chain: MPLHDRIVGHFQASAQSKLDAADALAPRIEQGARLLVHSLAQGGKILACGNGGSAADAQHFASEMLNRFEQERPGLAALALTTDTSTLTSIANDYAYDQVFARQVKALGQPGDVLLAISTSGNSANVLQAVAAAHARSMQVIALTGRSGGGLAEQIDDGDVCICVPAESTARIQEIHLLTIHCLCDAVDSLLLGVEE.

The region spanning 36–197 is the SIS domain; the sequence is LVHSLAQGGK…VDSLLLGVEE (162 aa). 51–53 contacts substrate; sequence NGG. Zn(2+)-binding residues include H60 and E64. Substrate-binding positions include E64, 93 to 94, 119 to 121, S124, and Q174; these read ND and STS. 2 residues coordinate Zn(2+): Q174 and H182.

Belongs to the SIS family. GmhA subfamily. As to quaternary structure, homotetramer. Zn(2+) is required as a cofactor.

It is found in the cytoplasm. The enzyme catalyses 2 D-sedoheptulose 7-phosphate = D-glycero-alpha-D-manno-heptose 7-phosphate + D-glycero-beta-D-manno-heptose 7-phosphate. Its pathway is carbohydrate biosynthesis; D-glycero-D-manno-heptose 7-phosphate biosynthesis; D-glycero-alpha-D-manno-heptose 7-phosphate and D-glycero-beta-D-manno-heptose 7-phosphate from sedoheptulose 7-phosphate: step 1/1. Catalyzes the isomerization of sedoheptulose 7-phosphate in D-glycero-D-manno-heptose 7-phosphate. This Thiobacillus denitrificans (strain ATCC 25259 / T1) protein is Phosphoheptose isomerase.